The primary structure comprises 195 residues: FMN-dependent NADH:quinone oxidoreductase (195 aa).

FMN-binding positions include Ser10, 16 to 18 (SVS), and 88 to 91 (MYNF).

It belongs to the azoreductase type 1 family. Homodimer. FMN is required as a cofactor.

The catalysed reaction is 2 a quinone + NADH + H(+) = 2 a 1,4-benzosemiquinone + NAD(+). It carries out the reaction N,N-dimethyl-1,4-phenylenediamine + anthranilate + 2 NAD(+) = 2-(4-dimethylaminophenyl)diazenylbenzoate + 2 NADH + 2 H(+). Functionally, quinone reductase that provides resistance to thiol-specific stress caused by electrophilic quinones. Its function is as follows. Also exhibits azoreductase activity. Catalyzes the reductive cleavage of the azo bond in aromatic azo compounds to the corresponding amines. The protein is FMN-dependent NADH:quinone oxidoreductase of Francisella philomiragia subsp. philomiragia (strain ATCC 25017 / CCUG 19701 / FSC 153 / O#319-036).